Here is a 241-residue protein sequence, read N- to C-terminus: Glucosamine-6-phosphate deaminase (241 aa).

Asp-67 serves as the catalytic Proton acceptor; for enolization step. Asn-136 functions as the For ring-opening step in the catalytic mechanism. The Proton acceptor; for ring-opening step role is filled by His-138. Catalysis depends on Glu-143, which acts as the For ring-opening step.

The protein belongs to the glucosamine/galactosamine-6-phosphate isomerase family. NagB subfamily.

It catalyses the reaction alpha-D-glucosamine 6-phosphate + H2O = beta-D-fructose 6-phosphate + NH4(+). Its pathway is amino-sugar metabolism; N-acetylneuraminate degradation; D-fructose 6-phosphate from N-acetylneuraminate: step 5/5. Its function is as follows. Catalyzes the reversible isomerization-deamination of glucosamine 6-phosphate (GlcN6P) to form fructose 6-phosphate (Fru6P) and ammonium ion. In Clostridium novyi (strain NT), this protein is Glucosamine-6-phosphate deaminase.